A 290-amino-acid polypeptide reads, in one-letter code: Alpha-mannosidase (290 aa).

Asp-17 (nucleophile) is an active-site residue. A glycan (N-linked (GlcNAc...) asparagine) is linked at Asn-64.

It belongs to the glycosyl hydrolase 38 family. Dimer. Requires Zn(2+) as cofactor.

It carries out the reaction Hydrolysis of terminal, non-reducing alpha-D-mannose residues in alpha-D-mannosides.. Its activity is regulated as follows. Inhibited by swainsonine but not by 1-desoxymannojirimycin. Functionally, liberates mannose from p-nitrophenyl-alpha-D-mannoside. This is Alpha-mannosidase from Lablab purpureus (Hyacinth bean).